The primary structure comprises 128 residues: Large ribosomal subunit protein eL22 (128 aa).

This sequence belongs to the eukaryotic ribosomal protein eL22 family. As to quaternary structure, component of the large ribosomal subunit.

The protein localises to the cytoplasm. Component of the large ribosomal subunit. The ribosome is a large ribonucleoprotein complex responsible for the synthesis of proteins in the cell. The polypeptide is Large ribosomal subunit protein eL22 (rpl22) (Xenopus tropicalis (Western clawed frog)).